We begin with the raw amino-acid sequence, 385 residues long: UPF0284 protein P9215_05181 (385 aa).

It belongs to the UPF0284 family.

The protein is UPF0284 protein P9215_05181 of Prochlorococcus marinus (strain MIT 9215).